A 427-amino-acid polypeptide reads, in one-letter code: 3-phosphoshikimate 1-carboxyvinyltransferase (427 aa).

Lys20, Ser21, and Arg25 together coordinate 3-phosphoshikimate. Lys20 contributes to the phosphoenolpyruvate binding site. Phosphoenolpyruvate is bound by residues Gly92 and Arg120. The 3-phosphoshikimate site is built by Ser166, Gln168, Asp312, and Lys339. Gln168 lines the phosphoenolpyruvate pocket. Asp312 (proton acceptor) is an active-site residue. The phosphoenolpyruvate site is built by Arg343 and Arg385.

It belongs to the EPSP synthase family. In terms of assembly, monomer.

It is found in the cytoplasm. It catalyses the reaction 3-phosphoshikimate + phosphoenolpyruvate = 5-O-(1-carboxyvinyl)-3-phosphoshikimate + phosphate. It participates in metabolic intermediate biosynthesis; chorismate biosynthesis; chorismate from D-erythrose 4-phosphate and phosphoenolpyruvate: step 6/7. Catalyzes the transfer of the enolpyruvyl moiety of phosphoenolpyruvate (PEP) to the 5-hydroxyl of shikimate-3-phosphate (S3P) to produce enolpyruvyl shikimate-3-phosphate and inorganic phosphate. This is 3-phosphoshikimate 1-carboxyvinyltransferase from Streptococcus equi subsp. zooepidemicus (strain MGCS10565).